The sequence spans 306 residues: 1-aminocyclopropane-1-carboxylate oxidase (306 aa).

In terms of domain architecture, Fe2OG dioxygenase spans 153 to 253; sequence PFFGTKVSHY…RRSIASFYNP (101 aa). Fe cation contacts are provided by histidine 177, aspartate 179, and histidine 234.

The protein belongs to the iron/ascorbate-dependent oxidoreductase family. Requires Fe cation as cofactor.

The enzyme catalyses 1-aminocyclopropane-1-carboxylate + L-ascorbate + O2 = ethene + L-dehydroascorbate + hydrogen cyanide + CO2 + 2 H2O. It functions in the pathway alkene biosynthesis; ethylene biosynthesis via S-adenosyl-L-methionine; ethylene from S-adenosyl-L-methionine: step 2/2. In Musa acuminata (Banana), this protein is 1-aminocyclopropane-1-carboxylate oxidase (MAO1B).